A 95-amino-acid chain; its full sequence is Large ribosomal subunit protein eL37x (95 aa).

Zn(2+) is bound by residues cysteine 19, cysteine 22, cysteine 34, and cysteine 37. The C4-type zinc-finger motif lies at 19–37; sequence CVRCGRRSFHIQKSRCSAC. The disordered stretch occupies residues 73–95; the sequence is RFKTGFREGTEAKPRSKASASSA. A compositionally biased stretch (basic and acidic residues) spans 77 to 86; that stretch reads GFREGTEAKP.

Belongs to the eukaryotic ribosomal protein eL37 family. Zn(2+) is required as a cofactor.

In terms of biological role, binds to the 23S rRNA. In Arabidopsis thaliana (Mouse-ear cress), this protein is Large ribosomal subunit protein eL37x (RPL37C).